The following is a 240-amino-acid chain: Allene oxide cyclase, chloroplastic (240 aa).

Residues 1 to 49 (MAAAAPSRVSVRAAAPGQTGGFAKIRPQVVVAAAARSAGVSGRRARSVR) constitute a chloroplast transit peptide.

It belongs to the allene oxide cyclase family.

The protein localises to the plastid. It is found in the chloroplast. The enzyme catalyses (9Z,13S,15Z)-12,13-epoxyoctadeca-9,11,15-trienoate = (9S,13S,15Z)-12-oxophyto-10,15-dienoate. It participates in lipid metabolism; polyunsaturated fatty acid biosynthesis. Functionally, involved in the production of 12-oxo-phytodienoic acid (OPDA), a precursor of jasmonic acid (JA). Required for the production of JA in response to wounding. Necessary for flower and coleoptile development regulation by light, including blue (BL), red (RL) and far red (FR) lights. Involved in the auxin-mediated signaling pathway leading to growth stimulation. Essential for photodestruction of phyA upon activation by RL and FR. Implicated in responses to salt stress (NaCl). Its function is as follows. Confers resistance to incompatible strains of the blast fungus Magnaporthe grisea, jasmonic acid (JA) thus playing a significant role in the resistance to fungal infection. Implicated in riboflavin-induced resistance to the sheath blight Rhizoctonia solani. Required for Pseudomonas fluorescens-mediated JA-dependent induced systemic resistance (ISR). Confers some resistance, independently of the JA pathway but probably via OPDA accumulation, to brown planthopper (BPH, Nilaparvata lugens), a destructive, monophagous, piercing-sucking insect, mainly by reducing its feeding activity and survival rate. Triggers resistance to the chewing insect striped stem borer (SSB) Chilo suppressalis, to the root hemiparasite witchweed Striga hermonthica, and to the root feeder insect rice water weevil Lissorhoptrus oryzophilus, in a JA-dependent manner, by attenuating both the growth mass and growth rate of caterpillars. This Oryza sativa subsp. indica (Rice) protein is Allene oxide cyclase, chloroplastic.